The chain runs to 200 residues: Arylesterase (200 aa).

The first 19 residues, 1-19 (MIRLLSLVLFFCLSAASQA), serve as a signal peptide directing secretion. Ser-29 functions as the Nucleophile in the catalytic mechanism. Catalysis depends on residues Asp-176 and His-179.

Belongs to the 'GDSL' lipolytic enzyme family. In terms of assembly, homodimer.

The catalysed reaction is a phenyl acetate + H2O = a phenol + acetate + H(+). Favors the hydrolysis of several arylesters. This chain is Arylesterase, found in Vibrio mimicus.